The sequence spans 238 residues: Ubiquinone/menaquinone biosynthesis C-methyltransferase UbiE (238 aa).

Positions 62 and 82 each coordinate S-adenosyl-L-methionine.

This sequence belongs to the class I-like SAM-binding methyltransferase superfamily. MenG/UbiE family.

The enzyme catalyses a 2-demethylmenaquinol + S-adenosyl-L-methionine = a menaquinol + S-adenosyl-L-homocysteine + H(+). The catalysed reaction is a 2-methoxy-6-(all-trans-polyprenyl)benzene-1,4-diol + S-adenosyl-L-methionine = a 5-methoxy-2-methyl-3-(all-trans-polyprenyl)benzene-1,4-diol + S-adenosyl-L-homocysteine + H(+). It participates in quinol/quinone metabolism; menaquinone biosynthesis; menaquinol from 1,4-dihydroxy-2-naphthoate: step 2/2. Its pathway is cofactor biosynthesis; ubiquinone biosynthesis. Its function is as follows. Methyltransferase required for the conversion of demethylmenaquinol (DMKH2) to menaquinol (MKH2) and the conversion of 2-polyprenyl-6-methoxy-1,4-benzoquinol (DDMQH2) to 2-polyprenyl-3-methyl-6-methoxy-1,4-benzoquinol (DMQH2). This chain is Ubiquinone/menaquinone biosynthesis C-methyltransferase UbiE, found in Wolbachia pipientis wMel.